The chain runs to 261 residues: Small ribosomal subunit protein eS4B (261 aa).

Ser32 carries the phosphoserine modification. Residues 42-105 (LPLIVFLRNR…NENFRLVYDV (64 aa)) form the S4 RNA-binding domain. Residue Lys62 forms a Glycyl lysine isopeptide (Lys-Gly) (interchain with G-Cter in ubiquitin) linkage. At Thr115 the chain carries Phosphothreonine. Residues Lys134, Lys161, Lys168, Lys174, Lys179, Lys211, and Lys233 each participate in a glycyl lysine isopeptide (Lys-Gly) (interchain with G-Cter in ubiquitin) cross-link. Ser247 bears the Phosphoserine mark.

It belongs to the eukaryotic ribosomal protein eS4 family. As to quaternary structure, component of the small ribosomal subunit (SSU). Mature yeast ribosomes consist of a small (40S) and a large (60S) subunit. The 40S small subunit contains 1 molecule of ribosomal RNA (18S rRNA) and 33 different proteins (encoded by 57 genes). The large 60S subunit contains 3 rRNA molecules (25S, 5.8S and 5S rRNA) and 46 different proteins (encoded by 81 genes).

It is found in the cytoplasm. Functionally, component of the ribosome, a large ribonucleoprotein complex responsible for the synthesis of proteins in the cell. The small ribosomal subunit (SSU) binds messenger RNAs (mRNAs) and translates the encoded message by selecting cognate aminoacyl-transfer RNA (tRNA) molecules. The large subunit (LSU) contains the ribosomal catalytic site termed the peptidyl transferase center (PTC), which catalyzes the formation of peptide bonds, thereby polymerizing the amino acids delivered by tRNAs into a polypeptide chain. The nascent polypeptides leave the ribosome through a tunnel in the LSU and interact with protein factors that function in enzymatic processing, targeting, and the membrane insertion of nascent chains at the exit of the ribosomal tunnel. In Saccharomyces cerevisiae (strain ATCC 204508 / S288c) (Baker's yeast), this protein is Small ribosomal subunit protein eS4B.